Consider the following 862-residue polypeptide: Valine--tRNA ligase (862 aa).

Residues 43–53 (PTVSGALHVGH) carry the 'HIGH' region motif. The disordered stretch occupies residues 459–494 (ERPILPDDAALPVDPSSDTPTGYHDSQRHQPGGFMA). The short motif at 574–578 (KMSKS) is the 'KMSKS' region element. Residue Lys-577 coordinates ATP.

It belongs to the class-I aminoacyl-tRNA synthetase family. ValS type 2 subfamily. Monomer.

The protein resides in the cytoplasm. The enzyme catalyses tRNA(Val) + L-valine + ATP = L-valyl-tRNA(Val) + AMP + diphosphate. In terms of biological role, catalyzes the attachment of valine to tRNA(Val). As ValRS can inadvertently accommodate and process structurally similar amino acids such as threonine, to avoid such errors, it has a 'posttransfer' editing activity that hydrolyzes mischarged Thr-tRNA(Val) in a tRNA-dependent manner. The chain is Valine--tRNA ligase from Salinispora arenicola (strain CNS-205).